The chain runs to 675 residues: Heat shock 70 kDa protein, mitochondrial (675 aa).

A mitochondrion-targeting transit peptide spans 1–52 (MAATLLRSLQRRNLSSSSVSAFRSLTGSTKTSYATHKLASLTRPFSSRPAGN). Residues 639–675 (VSKIGQHMSGGSSGGPSEGGSQGGEQAPEAEYEEVKK) form a disordered region. Residues 649-661 (GSSGGPSEGGSQG) show a composition bias toward gly residues. The segment covering 666 to 675 (PEAEYEEVKK) has biased composition (acidic residues).

It belongs to the heat shock protein 70 family.

The protein resides in the mitochondrion. The polypeptide is Heat shock 70 kDa protein, mitochondrial (HSP1) (Pisum sativum (Garden pea)).